The sequence spans 342 residues: Phenylalanine--tRNA ligase alpha subunit (342 aa).

Glu260 serves as a coordination point for Mg(2+).

This sequence belongs to the class-II aminoacyl-tRNA synthetase family. Phe-tRNA synthetase alpha subunit type 1 subfamily. In terms of assembly, tetramer of two alpha and two beta subunits. The cofactor is Mg(2+).

It is found in the cytoplasm. The enzyme catalyses tRNA(Phe) + L-phenylalanine + ATP = L-phenylalanyl-tRNA(Phe) + AMP + diphosphate + H(+). The chain is Phenylalanine--tRNA ligase alpha subunit from Nocardia farcinica (strain IFM 10152).